A 331-amino-acid chain; its full sequence is L-lactate dehydrogenase A chain (331 aa).

NAD(+) contacts are provided by residues 29–57 (GMVGMASAISILLKDLCDELAMVDVMEDK) and Arg98. Substrate is bound by residues Arg105, Asn137, and Arg168. Asn137 contacts NAD(+). The active-site Proton acceptor is the His192. Residue Thr247 coordinates substrate.

The protein belongs to the LDH/MDH superfamily. LDH family. Homotetramer.

It is found in the cytoplasm. The enzyme catalyses (S)-lactate + NAD(+) = pyruvate + NADH + H(+). The protein operates within fermentation; pyruvate fermentation to lactate; (S)-lactate from pyruvate: step 1/1. Interconverts simultaneously and stereospecifically pyruvate and lactate with concomitant interconversion of NADH and NAD(+). The chain is L-lactate dehydrogenase A chain (ldha) from Paranotothenia magellanica (Maori cod).